Reading from the N-terminus, the 842-residue chain is Elongation factor 2 (842 aa).

The 237-residue stretch at 17–253 folds into the tr-type G domain; the sequence is TNVRNMSVIA…LWGDSYFNPK (237 aa). GTP-binding positions include 26-33, 158-161, and 213-215; these read AHVDHGKS, NKVD, and SGL. His699 carries the post-translational modification Diphthamide.

It belongs to the TRAFAC class translation factor GTPase superfamily. Classic translation factor GTPase family. EF-G/EF-2 subfamily.

It is found in the cytoplasm. The catalysed reaction is GTP + H2O = GDP + phosphate + H(+). In terms of biological role, catalyzes the GTP-dependent ribosomal translocation step during translation elongation. During this step, the ribosome changes from the pre-translocational (PRE) to the post-translocational (POST) state as the newly formed A-site-bound peptidyl-tRNA and P-site-bound deacylated tRNA move to the P and E sites, respectively. Catalyzes the coordinated movement of the two tRNA molecules, the mRNA and conformational changes in the ribosome. This Debaryomyces hansenii (strain ATCC 36239 / CBS 767 / BCRC 21394 / JCM 1990 / NBRC 0083 / IGC 2968) (Yeast) protein is Elongation factor 2 (EFT1).